A 908-amino-acid polypeptide reads, in one-letter code: 26S proteasome non-ATPase regulatory subunit 2 (908 aa).

Position 1 is an N-acetylmethionine (methionine 1). The disordered stretch occupies residues 1-51; it reads MEEGGRDKTPVQSQQPSATTPSGADEKSSGKERRDAGEKDKEQELSEEDKQ. Threonine 9 and threonine 20 each carry phosphothreonine. Residues 10–22 show a composition bias toward polar residues; the sequence is PVQSQQPSATTPS. Positions 24–51 are enriched in basic and acidic residues; that stretch reads ADEKSSGKERRDAGEKDKEQELSEEDKQ. Serine 29 and serine 147 each carry phosphoserine. Tyrosine 194 bears the Phosphotyrosine mark. Phosphoserine is present on residues serine 361 and serine 363. PC repeat units follow at residues 409-442, 443-479, 480-514, 517-551, and 560-589; these read SAAA…YIKS, GALL…TMRL, GSIF…SMEV, VTAL…TELK, and LGLG…PFRS. Residue lysine 551 is modified to N6-acetyllysine. Basic and acidic residues predominate over residues 623-643; the sequence is KEKEEDKDKKEKKDKDKKEAP. The disordered stretch occupies residues 623–645; that stretch reads KEKEEDKDKKEKKDKDKKEAPAD. 2 PC repeats span residues 692–723 and 742–757; these read LALA…EVSY and AAML…KDPN. The interval 708–903 is required for interaction with UBLCP1; sequence DTLSKFSHDA…LEGFVILRKN (196 aa).

This sequence belongs to the proteasome subunit S2 family. In terms of assembly, component of the 19S proteasome regulatory particle complex. The 26S proteasome consists of a 20S core particle (CP) and two 19S regulatory subunits (RP). The regulatory particle is made of a lid composed of 9 subunits, a base containing 6 ATPases and few additional components including PSMD2. Interacts with RPGRIP1L. Interacts with CRY1 in a KDM8-dependent manner. Interacts (via C-terminus) with phosphatase UBLCP1 (via ubiquitin-like domain); the interaction recruits UBLCP1 to the 19S regulatory particle where it dephosphorylates 19S subunit PSMC2/RPT1 which impairs PSMC2 ATPase activity and disrupts 26S proteasome assembly.

Its function is as follows. Component of the 26S proteasome, a multiprotein complex involved in the ATP-dependent degradation of ubiquitinated proteins. This complex plays a key role in the maintenance of protein homeostasis by removing misfolded or damaged proteins, which could impair cellular functions, and by removing proteins whose functions are no longer required. Therefore, the proteasome participates in numerous cellular processes, including cell cycle progression, apoptosis, or DNA damage repair. In terms of biological role, binds to the intracellular domain of tumor necrosis factor type 1 receptor. The binding domain of TRAP1 and TRAP2 resides outside the death domain of TNFR1. The sequence is that of 26S proteasome non-ATPase regulatory subunit 2 (Psmd2) from Mus musculus (Mouse).